The primary structure comprises 217 residues: Orotidine 5'-phosphate decarboxylase (217 aa).

Substrate-binding positions include aspartate 14, lysine 36, 64–73 (DFKVADIPST), serine 120, 172–182 (PGVGAQGGNLS), glycine 197, and arginine 198. The active-site Proton donor is lysine 66.

This sequence belongs to the OMP decarboxylase family. Type 1 subfamily. As to quaternary structure, homodimer.

It carries out the reaction orotidine 5'-phosphate + H(+) = UMP + CO2. The protein operates within pyrimidine metabolism; UMP biosynthesis via de novo pathway; UMP from orotate: step 2/2. Catalyzes the decarboxylation of orotidine 5'-monophosphate (OMP) to uridine 5'-monophosphate (UMP). The chain is Orotidine 5'-phosphate decarboxylase from Methanococcus maripaludis (strain DSM 14266 / JCM 13030 / NBRC 101832 / S2 / LL).